A 474-amino-acid polypeptide reads, in one-letter code: Probable CAAX prenyl protease 1 (474 aa).

3 helical membrane passes run 103–123 (SWFSTIVSTFTLAVDLLIIKY), 196–216 (IFVIDLLKELSLGGLLMSVVV), and 230–250 (FIMYAWGAYIVFGLILQTIAP). H332 contributes to the Zn(2+) binding site. E333 is a catalytic residue. Zn(2+) is bound at residue H336. 2 consecutive transmembrane segments (helical) span residues 344 to 364 (INTIIDYGMSLFHLFLFAAFI) and 381 to 401 (VIVGLLLFSDALGPLSSILTF). E411 provides a ligand contact to Zn(2+). D415 acts as the Proton donor in catalysis.

The protein belongs to the peptidase M48A family. It depends on Zn(2+) as a cofactor.

It localises to the endoplasmic reticulum membrane. The catalysed reaction is Hydrolyzes the peptide bond -P2-(S-farnesyl or geranylgeranyl)C-P1'-P2'-P3'-COOH where P1' and P2' are amino acids with aliphatic side chains and P3' is any C-terminal residue.. Its function is as follows. Proteolytically removes the C-terminal three residues of farnesylated proteins. The sequence is that of Probable CAAX prenyl protease 1 from Schizosaccharomyces pombe (strain 972 / ATCC 24843) (Fission yeast).